The following is a 609-amino-acid chain: Pentatricopeptide repeat-containing protein At1g03540 (609 aa).

PPR repeat units follow at residues 25–59, 60–94, 95–126, 127–161, 162–196, 197–227, 228–263, 264–298, 299–329, 330–364, 396–426, 427–461, 462–497, and 498–532; these read SAPT…EIPA, TPKL…GLET, DRNV…RFVK, DAIS…GLDA, NEFT…GFEW, NHFI…MPEP, DVIC…GLVP, DGST…GIGS, NVVV…MSKK, NSVS…DLYC, NVIV…MSIR, NMIT…GIKP, DYIS…GIKP, and GTEH…NDAS. Positions 533 to 609 are type E motif; that stretch reads LWGVLLGPCA…TVGQSWIDAH (77 aa).

Belongs to the PPR family. PCMP-E subfamily.

The sequence is that of Pentatricopeptide repeat-containing protein At1g03540 (PCMP-E4) from Arabidopsis thaliana (Mouse-ear cress).